The primary structure comprises 235 residues: Transmembrane protein 182 (235 aa).

A signal peptide spans 1 to 33 (MKLSIGIFFGGLFGALGILIYLVAFGSDYWLLA). Topologically, residues 34–122 (KEIEKCSENQ…SALVYRGFWN (89 aa)) are extracellular. Residues Asn48, Asn90, and Asn107 are each glycosylated (N-linked (GlcNAc...) asparagine). Residues 123–143 (IFMLLGVVTAVIGGFLIICAA) form a helical membrane-spanning segment. Topologically, residues 144 to 155 (PFTNHRIYKAGG) are cytoplasmic. The chain crosses the membrane as a helical span at residues 156-176 (GLFITSGILFALVVVMHVFWV). The Extracellular segment spans residues 177–205 (QSVSDIKGYTDTRQQDCSQFTVYVSFGWS). The helical transmembrane segment at 206-226 (FMLAPFGIFFCLFAGMLFLLV) threads the bilayer. The Cytoplasmic portion of the chain corresponds to 227-235 (GHTIHVHTK).

It belongs to the TMEM182 family.

Its subcellular location is the cell membrane. Its function is as follows. May negatively regulate myogenesis and skeletal muscle regeneration. This chain is Transmembrane protein 182 (tmem182), found in Xenopus tropicalis (Western clawed frog).